The chain runs to 201 residues: Ras-related protein Rab-1B (201 aa).

N-acetylmethionine is present on methionine 1. Serine 17, glycine 18, valine 19, glycine 20, lysine 21, serine 22, cysteine 23, tyrosine 33, threonine 34, glutamate 35, serine 36, serine 39, and threonine 40 together coordinate GTP. Residue serine 22 participates in Mg(2+) binding. Positions 30–45 (DDTYTESYISTIGVDF) match the Switch 1 motif. Residues threonine 40 and aspartate 63 each coordinate Mg(2+). The switch 2 region; required for interaction with REP1/CHM stretch occupies residues 64-83 (TAGQERFRTITSSYYRGAHG). Positions 65–80 (AGQERFRTITSSYYRG) match the Switch 2 motif. Glycine 66, asparagine 121, lysine 122, aspartate 124, serine 151, alanine 152, and lysine 153 together coordinate GTP. Residues 174–201 (GPGAASGGERPNLKIDSTPVKPASGGCC) form a disordered region. Residues cysteine 200 and cysteine 201 are each lipidated (S-geranylgeranyl cysteine). Cysteine 201 carries the post-translational modification Cysteine methyl ester.

The protein belongs to the small GTPase superfamily. Rab family. As to quaternary structure, interacts with MICAL1 and MICAL2. Interacts (GTP-bound form) with MICALCL, MICAL1 and MILCAL3. Interacts with GDI1; the interaction requires the GDP-bound state. Interacts with CHM/REP1; the interaction requires the GDP-bound form and is necessary for prenylation by GGTase II. Interacts with RabGAP TBC1D20. Interacts (in GDP-bound form) with lipid phosphatase MTMR6 (via GRAM domain); the interaction regulates MTMR6 recruitment to the endoplasmic reticulum-Golgi intermediate compartment. Interacts (in GDP-bound form) with lipid phosphatase MTMR7. Mg(2+) is required as a cofactor. Prenylated; by GGTase II, only after interaction of the substrate with Rab escort protein 1 (REP1).

It is found in the cytoplasm. The protein localises to the membrane. It localises to the preautophagosomal structure membrane. The protein resides in the perinuclear region. The catalysed reaction is GTP + H2O = GDP + phosphate + H(+). Its activity is regulated as follows. Regulated by guanine nucleotide exchange factors (GEFs) which promote the exchange of bound GDP for free GTP. Regulated by GTPase activating proteins (GAPs) including TBC1D20 which increases the GTP hydrolysis activity. Inhibited by GDP dissociation inhibitors (GDIs). In terms of biological role, the small GTPases Rab are key regulators of intracellular membrane trafficking, from the formation of transport vesicles to their fusion with membranes. Rabs cycle between an inactive GDP-bound form and an active GTP-bound form that is able to recruit to membranes different set of downstream effectors directly responsible for vesicle formation, movement, tethering and fusion. Plays a role in the initial events of the autophagic vacuole development which take place at specialized regions of the endoplasmic reticulum. Regulates vesicular transport between the endoplasmic reticulum and successive Golgi compartments. Required to modulate the compacted morphology of the Golgi. Promotes the recruitment of lipid phosphatase MTMR6 to the endoplasmic reticulum-Golgi intermediate compartment. This is Ras-related protein Rab-1B (Rab1b) from Mus musculus (Mouse).